The sequence spans 72 residues: uncharacterized protein (72 aa).

The protein localises to the cytoplasm. It localises to the nucleus. This is an uncharacterized protein from Saccharomyces cerevisiae (strain ATCC 204508 / S288c) (Baker's yeast).